Here is a 43-residue protein sequence, read N- to C-terminus: Potassium channel toxin gamma-KTx 4.13 (43 aa).

4 disulfide bridges follow: Cys5-Cys23, Cys11-Cys34, Cys20-Cys39, and Cys24-Cys41.

The protein belongs to the ergtoxin family. Gamma-KTx 4 subfamily. In terms of tissue distribution, expressed by the venom gland.

The protein localises to the secreted. Its function is as follows. Reversibly blocks Kv11/ERG potassium channels. This chain is Potassium channel toxin gamma-KTx 4.13, found in Centruroides noxius (Mexican scorpion).